Consider the following 262-residue polypeptide: Acyl-[acyl-carrier-protein]--UDP-N-acetylglucosamine O-acyltransferase (262 aa).

This sequence belongs to the transferase hexapeptide repeat family. LpxA subfamily. In terms of assembly, homotrimer.

It localises to the cytoplasm. The catalysed reaction is a (3R)-hydroxyacyl-[ACP] + UDP-N-acetyl-alpha-D-glucosamine = a UDP-3-O-[(3R)-3-hydroxyacyl]-N-acetyl-alpha-D-glucosamine + holo-[ACP]. Its pathway is glycolipid biosynthesis; lipid IV(A) biosynthesis; lipid IV(A) from (3R)-3-hydroxytetradecanoyl-[acyl-carrier-protein] and UDP-N-acetyl-alpha-D-glucosamine: step 1/6. Its function is as follows. Involved in the biosynthesis of lipid A, a phosphorylated glycolipid that anchors the lipopolysaccharide to the outer membrane of the cell. The sequence is that of Acyl-[acyl-carrier-protein]--UDP-N-acetylglucosamine O-acyltransferase from Burkholderia orbicola (strain MC0-3).